A 360-amino-acid polypeptide reads, in one-letter code: MEECWVTEIANGSKDGLDSNPMKDYMILSGPQKTAVAVLCTLLGLLSALENVAVLYLILSSHQLRRKPSYLFIGSLAGADFLASVVFACSFVNFHVFHGVDSKAVFLLKIGSVTMTFTASVGSLLLTAIDRYLCLRYPPSYKALLTRGRALVTLGIMWVLSALVSYLPLMGWTCCPRPCSELFPLIPNDYLLSWLLFIAFLFSGIIYTYGHVLWKAHQHVASLSGHQDRQVPGMARMRLDVRLAKTLGLVLAVLLICWFPVLALMAHSLATTLSDQVKKAFAFCSMLCLINSMVNPVIYALRSGEIRSSAHHCLAHWKKCVRGLGSEAKEEAPRSSVTETEADGKITPWPDSRDLDLSDC.

The Extracellular portion of the chain corresponds to 1 to 33 (MEECWVTEIANGSKDGLDSNPMKDYMILSGPQK). An N-linked (GlcNAc...) asparagine glycan is attached at Asn-11. The helical transmembrane segment at 34-59 (TAVAVLCTLLGLLSALENVAVLYLIL) threads the bilayer. Over 60-71 (SSHQLRRKPSYL) the chain is Cytoplasmic. A helical membrane pass occupies residues 72–92 (FIGSLAGADFLASVVFACSFV). Residues 93 to 104 (NFHVFHGVDSKA) lie on the Extracellular side of the membrane. Residues 105-129 (VFLLKIGSVTMTFTASVGSLLLTAI) form a helical membrane-spanning segment. Topologically, residues 130 to 149 (DRYLCLRYPPSYKALLTRGR) are cytoplasmic. Residues 150–172 (ALVTLGIMWVLSALVSYLPLMGW) form a helical membrane-spanning segment. At 173 to 188 (TCCPRPCSELFPLIPN) the chain is on the extracellular side. A helical membrane pass occupies residues 189–214 (DYLLSWLLFIAFLFSGIIYTYGHVLW). Residues 215–246 (KAHQHVASLSGHQDRQVPGMARMRLDVRLAKT) lie on the Cytoplasmic side of the membrane. A helical membrane pass occupies residues 247–267 (LGLVLAVLLICWFPVLALMAH). The Extracellular portion of the chain corresponds to 268–279 (SLATTLSDQVKK). Residues 280–301 (AFAFCSMLCLINSMVNPVIYAL) form a helical membrane-spanning segment. Residues 302–360 (RSGEIRSSAHHCLAHWKKCVRGLGSEAKEEAPRSSVTETEADGKITPWPDSRDLDLSDC) lie on the Cytoplasmic side of the membrane. Positions 327–360 (EAKEEAPRSSVTETEADGKITPWPDSRDLDLSDC) are disordered. Residues Ser-335 and Ser-336 each carry the phosphoserine modification. Thr-338 bears the Phosphothreonine mark. Residues 351–360 (DSRDLDLSDC) are compositionally biased toward basic and acidic residues. Ser-352 bears the Phosphoserine mark.

It belongs to the G-protein coupled receptor 1 family. Post-translationally, constitutively phosphorylated on Ser-352; phosphorylation increases cell internalization and desensitizes the receptor. Preferentially expressed in cells of the immune system with higher expression in B-cells and NK cells (at protein level). Expressed in skin in suprabasal layers and hair follicles (at protein level). Highly expressed in tonsil and to a lower extent in spleen, peripheral blood mononuclear cells, and thymus. PubMed:14657172 could not detect expression in normal brain. Expressed in brain by perivascular microglial cells and dorsal root ganglion sensory neurons (at protein level). Two isoforms are produced by alternative promoter usage and differ only in the 5' UTR: isoform CB2A is observed predominantly in testis with some expression in brain, while isoform CB2B is predominant in spleen and leukocytes.

It is found in the cell membrane. Its subcellular location is the cell projection. It localises to the dendrite. The protein resides in the perikaryon. Its function is as follows. Heterotrimeric G protein-coupled receptor for endocannabinoid 2-arachidonoylglycerol mediating inhibition of adenylate cyclase. May function in inflammatory response, nociceptive transmission and bone homeostasis. This is Cannabinoid receptor 2 (CNR2) from Homo sapiens (Human).